A 453-amino-acid polypeptide reads, in one-letter code: L-cysteine:1D-myo-inositol 2-amino-2-deoxy-alpha-D-glucopyranoside ligase (453 aa).

C58 provides a ligand contact to Zn(2+). L-cysteinyl-5'-AMP is bound by residues C58–T61, T73, and N96–T98. A 'HIGH' region motif is present at residues I60–H70. Residues E221–P226 carry the 'ERGGDP' region motif. W262 is a binding site for L-cysteinyl-5'-AMP. C266 contributes to the Zn(2+) binding site. Residue G284–D286 coordinates L-cysteinyl-5'-AMP. Residue H291 coordinates Zn(2+). Residue V317 participates in L-cysteinyl-5'-AMP binding. The short motif at K323–S327 is the 'KMSKS' region element.

Belongs to the class-I aminoacyl-tRNA synthetase family. MshC subfamily. Monomer. Zn(2+) serves as cofactor.

The enzyme catalyses 1D-myo-inositol 2-amino-2-deoxy-alpha-D-glucopyranoside + L-cysteine + ATP = 1D-myo-inositol 2-(L-cysteinylamino)-2-deoxy-alpha-D-glucopyranoside + AMP + diphosphate + H(+). Catalyzes the ATP-dependent condensation of GlcN-Ins and L-cysteine to form L-Cys-GlcN-Ins. This Rothia mucilaginosa (strain DY-18) (Stomatococcus mucilaginosus) protein is L-cysteine:1D-myo-inositol 2-amino-2-deoxy-alpha-D-glucopyranoside ligase.